The chain runs to 477 residues: MKLWILGLGEFFQRYRNIWREIWKIRKQLDTPARQKDENEFLPRHLELIETPISKKPRLIAYLIMLFLFLAIVISIISKVEIVASATGKLVFSGHSKEIKPIENALVKDIFVKDGQFVEKGQLLLNLTALGCDADKQKTKVSLGLERLDGYRYKSLLYSIEHNRLPLLDFNQADFDSVQEEDKTGARHLITEQFETWQKQKYQKELAYQRKQAEKQTVLANIRKYESASRIEKEKLSDLKKLYDVKSISKHELLAQENRYVEASNELSVYQSHLKEVESDLLKAQEDLKLVTQLFKSDILEKLQQNIQREKQLTLELEKNEQRQLASIIRAPVSGTVQQLKTHTKGGVVTTAETLMVIAPEDDVLEVSALIQNKDVGFVEIGQEAVIKVETFPYTRYGYLYGKVKTITLDAIEHPQLGLVFNSIIEINKKTLTDGDKEIQLGSGMSVIAEIKTGERSVISFLLSPLEESITESLRER.

Topologically, residues 1–59 (MKLWILGLGEFFQRYRNIWREIWKIRKQLDTPARQKDENEFLPRHLELIETPISKKPRL) are cytoplasmic. Residues 60 to 77 (IAYLIMLFLFLAIVISII) traverse the membrane as a helical segment. Over 78–477 (SKVEIVASAT…ESITESLRER (400 aa)) the chain is Periplasmic.

The protein belongs to the membrane fusion protein (MFP) (TC 8.A.1) family.

The protein resides in the cell inner membrane. Functionally, involved in the transport of the toxin RTX-III. The sequence is that of RTX-III toxin determinant D (apxIIID) from Actinobacillus pleuropneumoniae (Haemophilus pleuropneumoniae).